We begin with the raw amino-acid sequence, 217 residues long: Ribosomal RNA small subunit methyltransferase G (217 aa).

Residues glycine 85, leucine 90, 135–136 (IE), and arginine 149 each bind S-adenosyl-L-methionine.

Belongs to the methyltransferase superfamily. RNA methyltransferase RsmG family.

The protein localises to the cytoplasm. It carries out the reaction guanosine(527) in 16S rRNA + S-adenosyl-L-methionine = N(7)-methylguanosine(527) in 16S rRNA + S-adenosyl-L-homocysteine. Its function is as follows. Specifically methylates the N7 position of guanine in position 527 of 16S rRNA. The sequence is that of Ribosomal RNA small subunit methyltransferase G from Acidiphilium cryptum (strain JF-5).